The sequence spans 195 residues: Myosin regulatory light chain, striated muscle, 25 kDa isoform (195 aa).

Positions 1–17 (AKDKEKKEKKDKKKDDA) are enriched in basic and acidic residues. Positions 1–39 (AKDKEKKEKKDKKKDDAPAEEAPAAAAAPAEEAAPTPSA) are disordered. Positions 20 to 39 (EEAPAAAAAPAEEAAPTPSA) are enriched in low complexity. 2 EF-hand domains span residues 55–90 (NQIQEFKEAFTMIDQDRDGIIGPDDLGNIFQQIGRE) and 124–159 (DTEGTLRDAFALFDEDKLGYLLEEYVKDLLTNVGDQ). Ca(2+) contacts are provided by Asp-68, Asp-70, Asp-72, and Asp-79.

Myosin is a hexamer of 2 heavy chains and 4 light chains.

In terms of biological role, plays an important role in regulation of muscle cell contractile activity. In Lumbricus terrestris (Common earthworm), this protein is Myosin regulatory light chain, striated muscle, 25 kDa isoform.